The sequence spans 211 residues: ATP phosphoribosyltransferase (211 aa).

This sequence belongs to the ATP phosphoribosyltransferase family. Short subfamily. In terms of assembly, heteromultimer composed of HisG and HisZ subunits.

It is found in the cytoplasm. It catalyses the reaction 1-(5-phospho-beta-D-ribosyl)-ATP + diphosphate = 5-phospho-alpha-D-ribose 1-diphosphate + ATP. Its pathway is amino-acid biosynthesis; L-histidine biosynthesis; L-histidine from 5-phospho-alpha-D-ribose 1-diphosphate: step 1/9. Functionally, catalyzes the condensation of ATP and 5-phosphoribose 1-diphosphate to form N'-(5'-phosphoribosyl)-ATP (PR-ATP). Has a crucial role in the pathway because the rate of histidine biosynthesis seems to be controlled primarily by regulation of HisG enzymatic activity. The protein is ATP phosphoribosyltransferase of Thermosynechococcus vestitus (strain NIES-2133 / IAM M-273 / BP-1).